We begin with the raw amino-acid sequence, 197 residues long: HTH-type transcriptional repressor BdcR (197 aa).

The 61-residue stretch at 15–75 (RFAPEQAISA…RVLNEYVGTE (61 aa)) folds into the HTH tetR-type domain. A DNA-binding region (H-T-H motif) is located at residues 38 to 57 (SVAEVTDYLGINPPSLYAAF).

In terms of biological role, negatively regulates expression of bdcA. The chain is HTH-type transcriptional repressor BdcR (bdcR) from Escherichia coli (strain K12).